A 400-amino-acid chain; its full sequence is GDNF family receptor alpha-3 (400 aa).

Positions 1 to 31 are cleaved as a signal peptide; sequence MVRPLNPRPLPPVVLMLLLLLPPSPLPLAAG. A disulfide bridge connects residues cysteine 51 and cysteine 57. N-linked (GlcNAc...) asparagine glycans are attached at residues asparagine 95 and asparagine 148. 10 disulfide bridges follow: cysteine 162/cysteine 218, cysteine 169/cysteine 175, cysteine 186/cysteine 196, cysteine 191/cysteine 239, cysteine 220/cysteine 227, cysteine 248/cysteine 316, cysteine 255/cysteine 261, cysteine 272/cysteine 288, cysteine 281/cysteine 340, and cysteine 318/cysteine 328. A glycan (N-linked (GlcNAc...) asparagine) is linked at asparagine 309. A lipid anchor (GPI-anchor amidated asparagine) is attached at asparagine 374. Residues 375-400 constitute a propeptide, removed in mature form; that stretch reads PAVRPQPWVPSLFSCTLPLILLLSLW.

This sequence belongs to the GDNFR family. In terms of assembly, interacts with ARTN ligand and RET: forms a 2:2:2 ternary complex composed of ARTN ligand, GFRA3 and RET receptor. Interacts with SORL1. Post-translationally, N-glycosylated. Widely expressed in adult and fetus which exhibit a similar pattern. Essentially not expressed in the central nervous system, but highly expressed in several sensory and sympathetic ganglia of the peripheral nervous system. Moderate expression in many non-neuronal tissues, particularly those of the digestive and urogenital systems, but high expression in stomach and appendix. Several types of glandular tissues show low expression. Very low or no expression detected in the hematopoietic system.

It is found in the cell membrane. Its function is as follows. Receptor for artemin (ARTN), a growth factor that supports the survival of sensory and sympathetic peripheral neurons. ARTN-binding leads to autophosphorylation and activation of the RET receptor. The protein is GDNF family receptor alpha-3 (GFRA3) of Homo sapiens (Human).